A 454-amino-acid chain; its full sequence is Protein pid-2 (454 aa).

Positions 31-61 (VQNNQKEHPPVQEIKTVSSKSKEHRVSSSRK) are disordered. Residues 50 to 61 (KSKEHRVSSSRK) are compositionally biased toward basic and acidic residues.

In terms of assembly, may interact with pid-4, pid-5, app-1 and prmt-5. In terms of tissue distribution, expressed throughout the mitotic and meiotic regions of the germline and in oocytes.

Its subcellular location is the cytoplasm. The protein localises to the perinuclear region. It localises to the cytoplasmic granule. Involved in gene silencing mediated by a class of 21 nucleotide PIWI-interacting RNAs (piRNAs) that possess a uracil residue at the 5'-end (also called 21U-RNAs) and that guide the Piwi protein prg-1 to its DNA targets for silencing. Not required for the biogenesis of 21U-RNAs. May also be involved in gene silencing mediated by 22G-siRNAs (a class of 22 nucleotide endogenous small interfering RNAs (siRNAs) that possess a triphosphorylated guanine residue at the 5'-end) and 26G-siRNAs (a class of 26 nucleotide siRNAs that possess a guanine residue at the 5'-end). Required for the biogenesis of secondary and tertiary 22G-siRNAs from many loci. Specifically, promotes the production of 22G-siRNAs from the 5' end of target mRNAs. May play a role in the production of 26G-siRNAs. Plays a role in small RNA-directed transgenerational epigenetic inheritance (also called RNAe) over several generations and germline immortality. Together with the argonaut protein hrde-1, promotes the silencing of the DNA transposable element Tc1. Required for the formation of liquid-like condensates in the cytoplasm called Z granules, playing a role in maintaining their assembly, viscosity and morphology in adult germ cells, and localization in early embryos. This chain is Protein pid-2, found in Caenorhabditis elegans.